A 289-amino-acid polypeptide reads, in one-letter code: Serine/threonine-protein phosphatase Pgam5, mitochondrial (289 aa).

This sequence belongs to the phosphoglycerate mutase family. BPG-dependent PGAM subfamily. Interacts with Pk92B/ASK1.

Its subcellular location is the mitochondrion outer membrane. It catalyses the reaction O-phospho-L-seryl-[protein] + H2O = L-seryl-[protein] + phosphate. The catalysed reaction is O-phospho-L-threonyl-[protein] + H2O = L-threonyl-[protein] + phosphate. Displays phosphatase activity for serine/threonine residues, and dephosphorylates and activates Pk92B kinase. Has apparently no phosphoglycerate mutase activity. The polypeptide is Serine/threonine-protein phosphatase Pgam5, mitochondrial (Drosophila yakuba (Fruit fly)).